Here is a 359-residue protein sequence, read N- to C-terminus: tRNA N6-adenosine threonylcarbamoyltransferase (359 aa).

The Fe cation site is built by His115 and His119. Residues 137–141 (LVSGG), Asp170, Gly183, and Asn283 contribute to the substrate site. Asp311 contacts Fe cation. Residues 328 to 359 (APDSLDIAPRSRWPLDEKSAPVFGTGRRGAKA) are disordered.

The protein belongs to the KAE1 / TsaD family. It depends on Fe(2+) as a cofactor.

The protein localises to the cytoplasm. The catalysed reaction is L-threonylcarbamoyladenylate + adenosine(37) in tRNA = N(6)-L-threonylcarbamoyladenosine(37) in tRNA + AMP + H(+). In terms of biological role, required for the formation of a threonylcarbamoyl group on adenosine at position 37 (t(6)A37) in tRNAs that read codons beginning with adenine. Is involved in the transfer of the threonylcarbamoyl moiety of threonylcarbamoyl-AMP (TC-AMP) to the N6 group of A37, together with TsaE and TsaB. TsaD likely plays a direct catalytic role in this reaction. This chain is tRNA N6-adenosine threonylcarbamoyltransferase, found in Brucella melitensis biotype 2 (strain ATCC 23457).